Reading from the N-terminus, the 20-residue chain is Dihydroorotase-like protein (20 aa).

Belongs to the metallo-dependent hydrolases superfamily. DHOase family. PyrC' subfamily. As to quaternary structure, heterododecamer of 6 active PyrB subunits and 6 non-catalytic PyrC' subunits.

Its function is as follows. Non-functional DHOase. This chain is Dihydroorotase-like protein (pyrC'), found in Pseudomonas fluorescens biotype A.